The following is an 87-amino-acid chain: Small ribosomal subunit protein bS18 (87 aa).

Belongs to the bacterial ribosomal protein bS18 family. In terms of assembly, part of the 30S ribosomal subunit. Forms a tight heterodimer with protein bS6.

Functionally, binds as a heterodimer with protein bS6 to the central domain of the 16S rRNA, where it helps stabilize the platform of the 30S subunit. The protein is Small ribosomal subunit protein bS18 of Sulfurimonas denitrificans (strain ATCC 33889 / DSM 1251) (Thiomicrospira denitrificans (strain ATCC 33889 / DSM 1251)).